The primary structure comprises 302 residues: Aurora/IPL1-related protein kinase 2 (302 aa).

Over residues 1-17 (MENKPQILQTKSKNTPN) the composition is skewed to polar residues. The interval 1-23 (MENKPQILQTKSKNTPNKGGKLS) is disordered. Residues 27-277 (FEIGRPLGKG…LQEVKDHYWV (251 aa)) enclose the Protein kinase domain. Residues 33-41 (LGKGKFGSV) and Lys56 each bind ATP. Asp150 serves as the catalytic Proton acceptor.

The protein belongs to the protein kinase superfamily. Ser/Thr protein kinase family. As to quaternary structure, interacts with zen-4 and icp-1. Part of a complex containing at least air-2; icp-1; csc-1 and bir-1. Interacts with tlk-1 and bmk-1.

It is found in the cytoplasm. The protein resides in the cytoskeleton. Its subcellular location is the chromosome. The protein localises to the midbody. The enzyme catalyses L-seryl-[protein] + ATP = O-phospho-L-seryl-[protein] + ADP + H(+). It carries out the reaction L-threonyl-[protein] + ATP = O-phospho-L-threonyl-[protein] + ADP + H(+). Its function is as follows. Serine/threonine-protein kinase which mediates both meiotic and mitotic chromosome segregation. Required for histone H3 'Ser-10' phosphorylation. Phosphorylates tlk-1 and zen-4. The sequence is that of Aurora/IPL1-related protein kinase 2 (air-2) from Caenorhabditis briggsae.